The chain runs to 148 residues: Oleosin 16 kDa (148 aa).

The disordered stretch occupies residues 1 to 21; it reads MADQHRGVIGGGGYGDRGGQE. The residue at position 2 (alanine 2) is an N-acetylalanine. A polar region spans residues 2–34; the sequence is ADQHRGVIGGGGYGDRGGQEQQEKQPFMMTALK. Residues 8–17 are compositionally biased toward gly residues; it reads VIGGGGYGDR. The interval 35–106 is hydrophobic; the sequence is TVTAATAGGS…AALSVFSWMY (72 aa). Transmembrane regions (helical) follow at residues 43-63, 66-86, and 87-107; these read GSML…LTVA, VLVI…LMAA, and GFVT…WMYK.

Belongs to the oleosin family.

Its subcellular location is the lipid droplet. The protein localises to the membrane. Functionally, may have a structural role to stabilize the lipid body during desiccation of the seed by preventing coalescence of the oil. Probably interacts with both lipid and phospholipid moieties of lipid bodies. May also provide recognition signals for specific lipase anchorage in lipolysis during seedling growth. In Oryza sativa subsp. japonica (Rice), this protein is Oleosin 16 kDa (OLE16).